The sequence spans 560 residues: Trans-activating transcriptional regulatory protein (560 aa).

Residues 106–133 are disordered; sequence DSMKRKASELDSDSDSGESSKGKKRVIK.

The protein belongs to the nucleopolyhedrovirus IE-1 protein family.

Its function is as follows. Regulatory transcriptional protein, which trans-activates gene expression from early baculovirus promoters. Can also trans-activate its own promoter, suggesting that it is autoregulated during normal infection of insect cells. This chain is Trans-activating transcriptional regulatory protein (IE1), found in Choristoneura fumiferana nuclear polyhedrosis virus (CfMNPV).